Here is a 1372-residue protein sequence, read N- to C-terminus: Polysaccharide lyase 8 family protein HylA (1372 aa).

The first 25 residues, 1–25 (MIKKIIVVVAFMLTGFSLTAMSASA), serve as a signal peptide directing secretion. The region spanning 63-172 (DGDETTRWSA…SIISFEAYEK (110 aa)) is the F5/8 type C domain. The 60-residue stretch at 183-242 (TENLTISEKRKQQLAFEVSPAGVDITEDQIEWSSSDPTIVTVDQTGNLTAVKSGEAKVTV) folds into the BIG2 domain. Residues H487, Y496, and R550 contribute to the active site. FIVAR domains are found at residues 1014–1075 (KEAL…VKQL), 1084–1146 (DKTN…VKQL), 1155–1217 (DKTN…VKQL), and 1226–1288 (DKTN…VKRL). The tract at residues 1288–1336 (LTLKNSGENKKEQKNGGNNGHLNTSTGVDQTGTKQVKPSSQGGFRKASQ) is disordered. Positions 1308-1329 (HLNTSTGVDQTGTKQVKPSSQG) are enriched in polar residues. The short motif at 1338 to 1342 (LPSTG) is the LPXTG sorting signal element. T1341 is subject to Pentaglycyl murein peptidoglycan amidated threonine. The propeptide at 1342–1372 (GEKKSIALVIIGLLVIASGCLLVFRKSKSKK) is removed by sortase.

It belongs to the polysaccharide lyase 8 family.

It is found in the secreted. The protein resides in the cell wall. Has a very modest degradation activity against heparin sodium salt (HS) in vitro. Involved in the pathogenesis of vancomycin-resistant E.faecalis infections. The sequence is that of Polysaccharide lyase 8 family protein HylA from Enterococcus faecalis (strain ATCC 700802 / V583).